A 197-amino-acid chain; its full sequence is Elongation factor Ts (197 aa).

Residues 81–84 (TDFV) are involved in Mg(2+) ion dislocation from EF-Tu.

This sequence belongs to the EF-Ts family.

The protein resides in the cytoplasm. Associates with the EF-Tu.GDP complex and induces the exchange of GDP to GTP. It remains bound to the aminoacyl-tRNA.EF-Tu.GTP complex up to the GTP hydrolysis stage on the ribosome. The sequence is that of Elongation factor Ts from Persephonella marina (strain DSM 14350 / EX-H1).